A 789-amino-acid chain; its full sequence is Probable phosphoketolase (789 aa).

Belongs to the XFP family. Thiamine diphosphate is required as a cofactor.

In Brucella abortus (strain 2308), this protein is Probable phosphoketolase.